Consider the following 347-residue polypeptide: Probable replication factor C subunit 5 (347 aa).

64-71 lines the ATP pocket; it reads GPPGTGKT.

It belongs to the activator 1 small subunits family. Heteropentamer of various rfc subunits that forms a complex (RFC) with PCNA in the presence of ATP.

The protein localises to the nucleus. The elongation of primed DNA templates by DNA polymerase delta and epsilon requires the action of the accessory proteins PCNA and activator 1. The sequence is that of Probable replication factor C subunit 5 (rfc5) from Dictyostelium discoideum (Social amoeba).